The following is a 352-amino-acid chain: Peptide chain release factor 1 (352 aa).

N5-methylglutamine is present on Q233. A disordered region spans residues 288–309 (NAKDRKEQVGSGDRSERIRTYN). Basic and acidic residues predominate over residues 289-306 (AKDRKEQVGSGDRSERIR).

It belongs to the prokaryotic/mitochondrial release factor family. Post-translationally, methylated by PrmC. Methylation increases the termination efficiency of RF1.

Its subcellular location is the cytoplasm. Peptide chain release factor 1 directs the termination of translation in response to the peptide chain termination codons UAG and UAA. The sequence is that of Peptide chain release factor 1 from Helicobacter pylori (strain HPAG1).